Consider the following 261-residue polypeptide: Claudin-18 (261 aa).

Topologically, residues 1–6 are cytoplasmic; that stretch reads MATTTC. Residues 7–27 traverse the membrane as a helical segment; that stretch reads QVVGLLLSLLGLAGCIAATGM. At 28–80 the chain is on the extracellular side; sequence DMWSTQDLYDNPVTSVFQYEGLWRSCVQQSSGFTECRPYFTILGLPAMLQAVR. Residues 81–101 form a helical membrane-spanning segment; that stretch reads ALMIVGIVLGVIGILVSIFAL. At 102 to 122 the chain is on the cytoplasmic side; it reads KCIRIGSMDDSAKAKMTLTSG. The helical transmembrane segment at 123-143 threads the bilayer; sequence IMFIISGVCAIIGVSVFANML. The Extracellular segment spans residues 144–173; that stretch reads VTNFWMSTANMYSGMGGMVQTVQTRYTFGA. A helical transmembrane segment spans residues 174 to 194; it reads ALFVGWIAGGLTLIGGVMMCI. Topologically, residues 195–261 are cytoplasmic; it reads ACRGLTPDDR…QSHPTKYDYV (67 aa). Positions 195 to 261 are required for role in regulation of RANKL-induced osteoclast differentiation; that stretch reads ACRGLTPDDR…QSHPTKYDYV (67 aa). Residue S214 is modified to Phosphoserine. A disordered region spans residues 242-261; sequence DGGARTEDDEQSHPTKYDYV.

This sequence belongs to the claudin family. As to quaternary structure, interacts with TJP2/ZO-2. Interacts with TJP1/ZO-1. Interacts with YAP1 (phosphorylated); the interaction sequesters YAP1 away from the nucleus and thereby restricts transcription of YAP1 target genes. Interacts with CLDN19. Expressed in the lung (at protein level).

It localises to the cell junction. Its subcellular location is the tight junction. The protein localises to the cell membrane. Functionally, involved in alveolar fluid homeostasis via regulation of alveolar epithelial tight junction composition and therefore ion transport and solute permeability, potentially via downstream regulation of the actin cytoskeleton organization and beta-2-adrenergic signaling. Required for lung alveolarization and maintenance of the paracellular alveolar epithelial barrier. Acts to maintain epithelial progenitor cell proliferation and organ size, via regulation of YAP1 localization away from the nucleus and thereby restriction of YAP1 target gene transcription. Acts as a negative regulator of RANKL-induced osteoclast differentiation, potentially via relocation of TJP2/ZO-2 away from the nucleus, subsequently involved in bone resorption in response to calcium deficiency. Mediates the osteoprotective effects of estrogen, potentially via acting downstream of estrogen signaling independently of RANKL signaling pathways. In terms of biological role, required for the formation of the gastric paracellular barrier via its role in tight junction formation, thereby involved in the response to gastric acidification. This Rattus norvegicus (Rat) protein is Claudin-18.